Here is a 167-residue protein sequence, read N- to C-terminus: Transcription antitermination protein NusB (167 aa).

A disordered region spans residues Met-1–Asn-21.

Belongs to the NusB family.

Involved in transcription antitermination. Required for transcription of ribosomal RNA (rRNA) genes. Binds specifically to the boxA antiterminator sequence of the ribosomal RNA (rrn) operons. This chain is Transcription antitermination protein NusB, found in Nitrosomonas eutropha (strain DSM 101675 / C91 / Nm57).